The primary structure comprises 238 residues: MYAPGGAGLPGGRRRRSPGSSALPKQPERSLASALPGALSITALCTALAEPAWLHIHGGTCSRQELGVSDVLGYVNPDLLKDFCMNPQTVLLLRVIAAFCFLGILCSLSAFLLDVFGPKHPALKITRRYAFAHILTVLQCATVIGFSYWASELILAQQQQHKKYHGSQVYVTFAVSFYLVAGAGGASILATAANLLRHYPTEEEEQALELLSEMEENDPYPAEYEVINQFQPPPAYTP.

Met1 carries the N-acetylmethionine modification. A compositionally biased stretch (gly residues) spans 1-11 (MYAPGGAGLPG). The interval 1 to 27 (MYAPGGAGLPGGRRRRSPGSSALPKQP) is disordered. Position 17 is a phosphoserine (Ser17). 3 helical membrane passes run 96–116 (IAAF…LDVF), 130–150 (AFAH…SYWA), and 169–189 (VYVT…ASIL).

Belongs to the TMEM127 family.

The protein resides in the cell membrane. It is found in the cytoplasm. In terms of biological role, controls cell proliferation acting as a negative regulator of TOR signaling pathway mediated by mTORC1. May act as a tumor suppressor. This is Transmembrane protein 127 (Tmem127) from Mus musculus (Mouse).